The primary structure comprises 331 residues: MSTENTTRQAETGAAYDATAKQKAQAKTARIPIKVVPAETLKKPDWIRVKAGSPTTRFYEIKNILREHQLHTVCEEASCPNIGECFGKGTATFMIMGDKCTRRCPFCDVGHGRPDPLDVNEPANLAKTIAALKLKYVVITSVDRDDLRDGGAGHYVECIRQTRAASPETRIEVLVPDFRGRMDRALEILKTAPPDVMNHNMETVPRLYKEARPGADYQFSLTLLKRFKEEVPGVPTKSGLMVGLGETDDEILDVMRDMRAHDIDMLTIGQYLAPSGHHLPVRRYVHPDTFRMFETEAYKMGFTHAAVGAMVRSSYHADQQAHQAGVDGAIG.

[4Fe-4S] cluster contacts are provided by Cys74, Cys79, Cys85, Cys100, Cys104, Cys107, and Ser314. Positions 85 to 303 (CFGKGTATFM…ETEAYKMGFT (219 aa)) constitute a Radical SAM core domain.

The protein belongs to the radical SAM superfamily. Lipoyl synthase family. [4Fe-4S] cluster is required as a cofactor.

The protein resides in the cytoplasm. It carries out the reaction [[Fe-S] cluster scaffold protein carrying a second [4Fe-4S](2+) cluster] + N(6)-octanoyl-L-lysyl-[protein] + 2 oxidized [2Fe-2S]-[ferredoxin] + 2 S-adenosyl-L-methionine + 4 H(+) = [[Fe-S] cluster scaffold protein] + N(6)-[(R)-dihydrolipoyl]-L-lysyl-[protein] + 4 Fe(3+) + 2 hydrogen sulfide + 2 5'-deoxyadenosine + 2 L-methionine + 2 reduced [2Fe-2S]-[ferredoxin]. It functions in the pathway protein modification; protein lipoylation via endogenous pathway; protein N(6)-(lipoyl)lysine from octanoyl-[acyl-carrier-protein]: step 2/2. In terms of biological role, catalyzes the radical-mediated insertion of two sulfur atoms into the C-6 and C-8 positions of the octanoyl moiety bound to the lipoyl domains of lipoate-dependent enzymes, thereby converting the octanoylated domains into lipoylated derivatives. The sequence is that of Lipoyl synthase from Leptothrix cholodnii (strain ATCC 51168 / LMG 8142 / SP-6) (Leptothrix discophora (strain SP-6)).